The following is a 261-amino-acid chain: Probable trans-aconitate 2-methyltransferase (261 aa).

Belongs to the methyltransferase superfamily. Tam family.

Its subcellular location is the cytoplasm. The catalysed reaction is trans-aconitate + S-adenosyl-L-methionine = (E)-3-(methoxycarbonyl)pent-2-enedioate + S-adenosyl-L-homocysteine. In terms of biological role, catalyzes the S-adenosylmethionine monomethyl esterification of trans-aconitate. The protein is Probable trans-aconitate 2-methyltransferase of Mycobacterium bovis (strain ATCC BAA-935 / AF2122/97).